We begin with the raw amino-acid sequence, 469 residues long: MTIKTRFAPSPTGFLHVGGARTALYSWLYARANQGEFVLRIEDTDLERSTPEACAAILEGMEWLGLNWDEGPYYQTKRFDRYNEIIAQMLEQGTAYKCYCSRERIEAMREEQAAKGEQQKYDGCCRDKAPRDTDEPFVVRFKNPTEGSVVFDDHVRGRIEISNELLDDLIIARTDGTPTYNFCVVVDDWDMGITCVVRGEDHINNTPRQINILKALNAPVPEYAHVAMILGDDGAKLSKRHGAVGVMQYRDDGYLPEALLNYLVRLGWSHGDQEVFSIEEMKQYFKLDDINKAASAFNTEKLIWLNQHYMKELAPEYVAKHLEWHMQDQNIDTANGPALAEVVSALAERAKTLKELAASSRYFYEDFAEFDETAAKKHLRGVALEPLQLLQKKFAELSEWNVEAIHQAIEATAAELELGMGKVGMPLRVAVTGAGMSPAVDLTAFLVGKARCEQRISKAIEFVANRINS.

The 'HIGH' region motif lies at 9 to 19 (PSPTGFLHVGG). Residues cysteine 98, cysteine 100, cysteine 125, and aspartate 127 each contribute to the Zn(2+) site. The 'KMSKS' region motif lies at 236 to 240 (KLSKR). Lysine 239 is a binding site for ATP.

It belongs to the class-I aminoacyl-tRNA synthetase family. Glutamate--tRNA ligase type 1 subfamily. As to quaternary structure, monomer. Zn(2+) is required as a cofactor.

Its subcellular location is the cytoplasm. The catalysed reaction is tRNA(Glu) + L-glutamate + ATP = L-glutamyl-tRNA(Glu) + AMP + diphosphate. Its function is as follows. Catalyzes the attachment of glutamate to tRNA(Glu) in a two-step reaction: glutamate is first activated by ATP to form Glu-AMP and then transferred to the acceptor end of tRNA(Glu). This is Glutamate--tRNA ligase from Shewanella loihica (strain ATCC BAA-1088 / PV-4).